Reading from the N-terminus, the 422-residue chain is Tyrosine--tRNA ligase (422 aa).

L-tyrosine is bound at residue tyrosine 37. The short motif at 42-51 (PTEESLHIGH) is the 'HIGH' region element. Positions 175 and 179 each coordinate L-tyrosine. The short motif at 235–239 (KFGKT) is the 'KMSKS' region element. ATP is bound at residue lysine 238. The region spanning 357–414 (KDLQEALVLTSLAQSRTQAKNMIISNSISINTEKIRKNHIFHEKDKLFGKFTLLSRGK) is the S4 RNA-binding domain.

This sequence belongs to the class-I aminoacyl-tRNA synthetase family. TyrS type 1 subfamily. As to quaternary structure, homodimer.

Its subcellular location is the cytoplasm. The enzyme catalyses tRNA(Tyr) + L-tyrosine + ATP = L-tyrosyl-tRNA(Tyr) + AMP + diphosphate + H(+). Functionally, catalyzes the attachment of tyrosine to tRNA(Tyr) in a two-step reaction: tyrosine is first activated by ATP to form Tyr-AMP and then transferred to the acceptor end of tRNA(Tyr). This is Tyrosine--tRNA ligase from Buchnera aphidicola subsp. Acyrthosiphon pisum (strain APS) (Acyrthosiphon pisum symbiotic bacterium).